The primary structure comprises 409 residues: Autophagy-related protein 21 (409 aa).

WD repeat units lie at residues 1 to 35 (MKVL…KCFE), 221 to 261 (VHKG…TLQS), 273 to 312 (TRPC…QQNK), and 361 to 402 (KVDD…GECI). The short motif at 269–273 (FRRGT) is the L/FRRG motif element.

The protein belongs to the WD repeat PROPPIN family.

The protein localises to the cytoplasm. Its subcellular location is the membrane. The protein resides in the vacuole membrane. Its function is as follows. Required for cytoplasm to vacuole transport (Cvt) vesicles formation and mitophagy. Involved in binding of phosphatidylethanolamine to ATG8 and in recruitment of ATG8 and ATG5 to the pre-autophagosomal structure. Protects ATG8 from ARG4-mediated cleavage. The polypeptide is Autophagy-related protein 21 (ATG21) (Eremothecium gossypii (strain ATCC 10895 / CBS 109.51 / FGSC 9923 / NRRL Y-1056) (Yeast)).